The chain runs to 1007 residues: RNA-binding protein 26 (1007 aa).

Lysine 94 is covalently cross-linked (Glycyl lysine isopeptide (Lys-Gly) (interchain with G-Cter in SUMO2)). Lysine 106 is covalently cross-linked (Glycyl lysine isopeptide (Lys-Gly) (interchain with G-Cter in SUMO1); alternate). Lysine 106 participates in a covalent cross-link: Glycyl lysine isopeptide (Lys-Gly) (interchain with G-Cter in SUMO2); alternate. Residues 106–118 (KKEEITKEEEREK) are compositionally biased toward basic and acidic residues. The tract at residues 106–241 (KKEEITKEEE…YTPVSSVPSI (136 aa)) is disordered. A Phosphoserine modification is found at serine 127. Residues 134-168 (RYRENRSRDERKKDDRSRKRDYDRNPPRRDSYRDR) are compositionally biased toward basic and acidic residues. The segment covering 169–186 (YNRRRGRSRSYSRSRSRS) has biased composition (basic residues). Basic and acidic residues-rich tracts occupy residues 187 to 201 (WSKERLRERDRDRSR) and 209 to 227 (RSRERDLVKPKYDLDRTDP). Positions 228 to 241 (LENNYTPVSSVPSI) are enriched in polar residues. The segment at 288–316 (PMPKKRCRDYDEKGFCMRGDMCPFDHGSD) adopts a C3H1-type zinc-finger fold. Residues 334-388 (QPPVVEGPPPPGLPPPPPILTPPPVNLRPPVPPPGPLPPSLPPVTGPPPPLPPLQ) show a composition bias toward pro residues. 2 disordered regions span residues 334 to 404 (QPPV…SSVP) and 460 to 519 (IGLT…TNSP). The span at 394 to 404 (APPNSATSSVP) shows a compositional bias: low complexity. Serine 496 is modified (phosphoserine). The residue at position 510 (lysine 510) is an N6-acetyllysine. Serine 518 carries the post-translational modification Phosphoserine. Residues 532-606 (TKLELRKVPP…RFIKVYWHRE (75 aa)) enclose the RRM 1 domain. Serine 616 carries the post-translational modification Phosphoserine. Coiled-coil stretches lie at residues 719–795 (DNNE…KAAS) and 823–847 (KKMQAGEEVTELRRKYTELQLEAAK). The segment at 853 to 884 (SGRGRGIHSRGRGAVHGRGRGRGRGRGVPGHA) is disordered. Over residues 857–877 (RGIHSRGRGAVHGRGRGRGRG) the composition is skewed to basic residues. An RRM 2 domain is found at 891–960 (RALEISAFTE…QDLKLAWNKP (70 aa)). The interval 966-1007 (AVETEEVEPDEEEFQEESLVDDSLLQDDDEEEEDNESRSWRR) is disordered. A compositionally biased stretch (acidic residues) spans 968–1000 (ETEEVEPDEEEFQEESLVDDSLLQDDDEEEEDN).

Functionally, may be involved in the turnover of nuclear polyadenylated (pA+) RNA. This is RNA-binding protein 26 from Homo sapiens (Human).